A 114-amino-acid polypeptide reads, in one-letter code: Ribonuclease P protein component (114 aa).

The protein belongs to the RnpA family. As to quaternary structure, consists of a catalytic RNA component (M1 or rnpB) and a protein subunit.

The catalysed reaction is Endonucleolytic cleavage of RNA, removing 5'-extranucleotides from tRNA precursor.. RNaseP catalyzes the removal of the 5'-leader sequence from pre-tRNA to produce the mature 5'-terminus. It can also cleave other RNA substrates such as 4.5S RNA. The protein component plays an auxiliary but essential role in vivo by binding to the 5'-leader sequence and broadening the substrate specificity of the ribozyme. This is Ribonuclease P protein component from Lactiplantibacillus plantarum (strain ATCC BAA-793 / NCIMB 8826 / WCFS1) (Lactobacillus plantarum).